A 210-amino-acid chain; its full sequence is Probable HTH-type transcriptional regulator ArpR (210 aa).

In terms of domain architecture, HTH tetR-type spans 10–70 (QETRAQIIEA…ALLDSLHETH (61 aa)). Positions 33–52 (TLADIAELAGVTRGAIYWHF) form a DNA-binding region, H-T-H motif.

Functionally, probable regulatory protein for the antibiotic efflux pump arpABC operon. May function as a repressor. This Pseudomonas putida (Arthrobacter siderocapsulatus) protein is Probable HTH-type transcriptional regulator ArpR (arpR).